A 300-amino-acid chain; its full sequence is F-box protein SKIP1 (300 aa).

The F-box; degenerate domain maps to 11–52; the sequence is LAPEILINIISRLTIQELWTGPMFVQKSWLTVCRDPYLWSIF.

As to quaternary structure, part of a SCF (ASK-cullin-F-box) protein ligase complex. Interacts with SKP1A/ASK1 and SKP1B/ASK2.

It localises to the nucleus. Its pathway is protein modification; protein ubiquitination. Component of SCF(ASK-cullin-F-box) E3 ubiquitin ligase complexes, which may mediate the ubiquitination and subsequent proteasomal degradation of target proteins. This is F-box protein SKIP1 (SKIP1) from Arabidopsis thaliana (Mouse-ear cress).